The chain runs to 300 residues: 33 kDa chaperonin (300 aa).

Intrachain disulfides connect Cys235–Cys237 and Cys269–Cys272.

The protein belongs to the HSP33 family. Under oxidizing conditions two disulfide bonds are formed involving the reactive cysteines. Under reducing conditions zinc is bound to the reactive cysteines and the protein is inactive.

The protein localises to the cytoplasm. Its function is as follows. Redox regulated molecular chaperone. Protects both thermally unfolding and oxidatively damaged proteins from irreversible aggregation. Plays an important role in the bacterial defense system toward oxidative stress. This chain is 33 kDa chaperonin, found in Pseudomonas syringae pv. syringae (strain B728a).